The primary structure comprises 435 residues: Palmitoyltransferase pfa4 (435 aa).

Residues M1 to R10 are Cytoplasmic-facing. Residues L11 to F31 form a helical membrane-spanning segment. At L32 to N48 the chain is on the lumenal side. The chain crosses the membrane as a helical span at residues I49 to V69. Over P70 to S129 the chain is Cytoplasmic. Residues R91 to F141 enclose the DHHC domain. C121 functions as the S-palmitoyl cysteine intermediate in the catalytic mechanism. Residues H130 to L150 form a helical membrane-spanning segment. Over E151 to G179 the chain is Lumenal. Residues H180 to L200 form a helical membrane-spanning segment. Over R201–Q435 the chain is Cytoplasmic. Positions R359–E368 are enriched in basic and acidic residues. The disordered stretch occupies residues R359–E408. Residues A376–H388 show a composition bias toward acidic residues. Residues G389–G405 are compositionally biased toward basic and acidic residues.

It belongs to the DHHC palmitoyltransferase family. PFA4 subfamily.

The protein resides in the endoplasmic reticulum membrane. The enzyme catalyses L-cysteinyl-[protein] + hexadecanoyl-CoA = S-hexadecanoyl-L-cysteinyl-[protein] + CoA. Mediates the reversible addition of palmitate to target proteins, thereby regulating their membrane association and biological function. In Emericella nidulans (strain FGSC A4 / ATCC 38163 / CBS 112.46 / NRRL 194 / M139) (Aspergillus nidulans), this protein is Palmitoyltransferase pfa4.